The primary structure comprises 407 residues: Naringenin 8-dimethylallyltransferase 2, chloroplastic (407 aa).

Residues 1-23 constitute a chloroplast transit peptide; it reads MGFVLPASFPGASSITTGGSCLR. 8 helical membrane-spanning segments follow: residues 117-137, 145-165, 206-226, 248-268, 285-305, 328-348, 352-372, and 383-403; these read FCRPYAIFSVVLGATFKSLVA, SLAFFIGWLQVVVAVICIHIF, ILGLGFAWIVGSWPLFWTVFI, VLTAISFIANVAVTRSLGFFL, LIFCTAIVSIYAIVIALFKDI, VFWICVSLLEMAYGVTILVGA, ILWSKIITVLGHAILASVLWY, and VVLQSFYMFIWKLHTAEYCLI.

The protein belongs to the UbiA prenyltransferase family. Mg(2+) serves as cofactor. It depends on Mn(2+) as a cofactor.

It is found in the plastid. The protein resides in the chloroplast membrane. It catalyses the reaction (2S)-naringenin + dimethylallyl diphosphate = sophoraflavanone B + diphosphate. In terms of biological role, involved in the biosynthesis of sophoraflavanone G (SFG). Can use flavanones (naringenin, liquiritigenin and hesperetin) as substrates, but not flavonols or isoflavones. Shows a strict specificity for dimethylallyl diphosphate. The chain is Naringenin 8-dimethylallyltransferase 2, chloroplastic (N8DT-2) from Sophora flavescens (Shrubby sophora).